The chain runs to 195 residues: Protein GrpE (195 aa).

Residues 1 to 24 show a composition bias toward polar residues; sequence MSSKEQNTPDEQVSQESEMEQGQQ. Residues 1-40 are disordered; it reads MSSKEQNTPDEQVSQESEMEQGQQAEAAPETVDVVDPRDE.

The protein belongs to the GrpE family. Homodimer.

The protein localises to the cytoplasm. In terms of biological role, participates actively in the response to hyperosmotic and heat shock by preventing the aggregation of stress-denatured proteins, in association with DnaK and GrpE. It is the nucleotide exchange factor for DnaK and may function as a thermosensor. Unfolded proteins bind initially to DnaJ; upon interaction with the DnaJ-bound protein, DnaK hydrolyzes its bound ATP, resulting in the formation of a stable complex. GrpE releases ADP from DnaK; ATP binding to DnaK triggers the release of the substrate protein, thus completing the reaction cycle. Several rounds of ATP-dependent interactions between DnaJ, DnaK and GrpE are required for fully efficient folding. This Sodalis glossinidius (strain morsitans) protein is Protein GrpE.